We begin with the raw amino-acid sequence, 230 residues long: Cutinase (230 aa).

An N-terminal signal peptide occupies residues 1 to 16 (MKFFALTTFLAATASA). A disulfide bond links cysteine 47 and cysteine 125. The active-site Nucleophile is serine 136. Cysteine 187 and cysteine 194 are joined by a disulfide. Aspartate 191 is a catalytic residue. Histidine 204 acts as the Proton donor/acceptor in catalysis.

This sequence belongs to the cutinase family. The 2 disulfide bonds play a critical role in holding the catalytic residues in juxta-position; reduction of the disulfide bridges results in the complete inactivation of the enzyme.

The protein resides in the secreted. It catalyses the reaction cutin + H2O = cutin monomers.. Its function is as follows. Catalyzes the hydrolysis of complex carboxylic polyesters found in the cell wall of plants. Degrades cutin, a macromolecule that forms the structure of the plant cuticle. Allows pathogenic fungi to penetrate through the cuticular barrier into the host plant during the initial stage of fungal infection. This is Cutinase (CUTA) from Fusarium solani subsp. cucurbitae (Neocosmosporum cucurbitae).